A 416-amino-acid chain; its full sequence is Tryptophan synthase beta chain (416 aa).

The residue at position 109 (Lys109) is an N6-(pyridoxal phosphate)lysine.

This sequence belongs to the TrpB family. As to quaternary structure, tetramer of two alpha and two beta chains. Pyridoxal 5'-phosphate is required as a cofactor.

The enzyme catalyses (1S,2R)-1-C-(indol-3-yl)glycerol 3-phosphate + L-serine = D-glyceraldehyde 3-phosphate + L-tryptophan + H2O. Its pathway is amino-acid biosynthesis; L-tryptophan biosynthesis; L-tryptophan from chorismate: step 5/5. The beta subunit is responsible for the synthesis of L-tryptophan from indole and L-serine. This Prochlorococcus marinus (strain SARG / CCMP1375 / SS120) protein is Tryptophan synthase beta chain.